The sequence spans 279 residues: Large ribosomal subunit protein uL2 (279 aa).

Positions 223–279 are disordered; it reads TVRGSAMNPNDHPHGGGEGRSPVGMDAPRTPWGKRHMGVKTRNNKKSSTSMIVRRRK. A compositionally biased stretch (basic residues) spans 254–267; the sequence is WGKRHMGVKTRNNK.

The protein belongs to the universal ribosomal protein uL2 family. In terms of assembly, part of the 50S ribosomal subunit. Forms a bridge to the 30S subunit in the 70S ribosome.

Its function is as follows. One of the primary rRNA binding proteins. Required for association of the 30S and 50S subunits to form the 70S ribosome, for tRNA binding and peptide bond formation. It has been suggested to have peptidyltransferase activity; this is somewhat controversial. Makes several contacts with the 16S rRNA in the 70S ribosome. The chain is Large ribosomal subunit protein uL2 from Ureaplasma parvum serovar 3 (strain ATCC 27815 / 27 / NCTC 11736).